Consider the following 101-residue polypeptide: Apolipoprotein C-II (101 aa).

The N-terminal stretch at 1–22 (MGTRCLLVLLLVLLVLKCEVQG) is a signal peptide. A propeptide spans 23-28 (DDMARQ) (removed in mature form). The interval 66–74 (AMDEKIRDM) is lipid binding. The segment at 78 to 101 (STAAVRIYTGILTDQILSMLTGDP) is lipoprotein lipase cofactor.

Belongs to the apolipoprotein C2 family. Proapolipoprotein C-II is synthesized as a sialic acid containing glycoprotein which is subsequently desialylated prior to its proteolytic processing. Post-translationally, proapolipoprotein C-II, the major form found in plasma undergoes proteolytic cleavage of its N-terminal hexapeptide to generate the mature form apolipoprotein C-II, which occurs as the minor form in plasma.

Its subcellular location is the secreted. In terms of biological role, component of chylomicrons, very low-density lipoproteins (VLDL), low-density lipoproteins (LDL), and high-density lipoproteins (HDL) in plasma. Plays an important role in lipoprotein metabolism as an activator of lipoprotein lipase, the enzyme which hydrolyzes the triacylglycerols on chylomicrons and VLDL. This Panthera tigris altaica (Siberian tiger) protein is Apolipoprotein C-II (APOC2).